Here is a 298-residue protein sequence, read N- to C-terminus: 4-hydroxy-tetrahydrodipicolinate synthase (298 aa).

Threonine 51 provides a ligand contact to pyruvate. Residue tyrosine 139 is the Proton donor/acceptor of the active site. The active-site Schiff-base intermediate with substrate is lysine 167. Isoleucine 209 serves as a coordination point for pyruvate.

It belongs to the DapA family. In terms of assembly, homotetramer; dimer of dimers.

The protein localises to the cytoplasm. The catalysed reaction is L-aspartate 4-semialdehyde + pyruvate = (2S,4S)-4-hydroxy-2,3,4,5-tetrahydrodipicolinate + H2O + H(+). It participates in amino-acid biosynthesis; L-lysine biosynthesis via DAP pathway; (S)-tetrahydrodipicolinate from L-aspartate: step 3/4. Catalyzes the condensation of (S)-aspartate-beta-semialdehyde [(S)-ASA] and pyruvate to 4-hydroxy-tetrahydrodipicolinate (HTPA). The chain is 4-hydroxy-tetrahydrodipicolinate synthase from Pasteurella multocida (strain Pm70).